The following is a 134-amino-acid chain: Phosphoribosyl-AMP cyclohydrolase (134 aa).

Asp78 contacts Mg(2+). Cys79 is a Zn(2+) binding site. Positions 80 and 82 each coordinate Mg(2+). 2 residues coordinate Zn(2+): Cys96 and Cys103.

It belongs to the PRA-CH family. In terms of assembly, homodimer. The cofactor is Mg(2+). It depends on Zn(2+) as a cofactor.

Its subcellular location is the cytoplasm. It catalyses the reaction 1-(5-phospho-beta-D-ribosyl)-5'-AMP + H2O = 1-(5-phospho-beta-D-ribosyl)-5-[(5-phospho-beta-D-ribosylamino)methylideneamino]imidazole-4-carboxamide. It participates in amino-acid biosynthesis; L-histidine biosynthesis; L-histidine from 5-phospho-alpha-D-ribose 1-diphosphate: step 3/9. In terms of biological role, catalyzes the hydrolysis of the adenine ring of phosphoribosyl-AMP. This is Phosphoribosyl-AMP cyclohydrolase from Cupriavidus taiwanensis (strain DSM 17343 / BCRC 17206 / CCUG 44338 / CIP 107171 / LMG 19424 / R1) (Ralstonia taiwanensis (strain LMG 19424)).